The sequence spans 237 residues: MQQSKEERVHDVFEKISDKYDVMNSVISFQRHKAWRKETMRIMDVKPGSKALDVCCGTADWTIALAGAVGEQGKVVGLDFSENMLSVGKQKVEALQLKQVELLHGNAMELPFEDNTFDYVTIGFGLRNVPDYMHVLKEMTRVVKPGGKVICLETSQPTMIGFRQGYILYFKYIMPLFGKLFAKSYKEYSWLQESASTFPGMKELANMFEKAGLERVQVKPFTFGVAAMHLGMKPESK.

Residues Thr-58, Asp-79, and 106-107 (NA) each bind S-adenosyl-L-methionine.

This sequence belongs to the class I-like SAM-binding methyltransferase superfamily. MenG/UbiE family.

It carries out the reaction a 2-demethylmenaquinol + S-adenosyl-L-methionine = a menaquinol + S-adenosyl-L-homocysteine + H(+). The protein operates within quinol/quinone metabolism; menaquinone biosynthesis; menaquinol from 1,4-dihydroxy-2-naphthoate: step 2/2. Functionally, methyltransferase required for the conversion of demethylmenaquinol (DMKH2) to menaquinol (MKH2). The protein is Demethylmenaquinone methyltransferase of Bacillus anthracis (strain A0248).